The chain runs to 520 residues: Cytochrome P450 84A1 (520 aa).

An N-acetylmethionine modification is found at M1. Residues 12–32 traverse the membrane as a helical segment; sequence LSDPTTSLVIVVSLFIFISFI. C458 contributes to the heme binding site.

This sequence belongs to the cytochrome P450 family. Requires heme as cofactor.

The protein resides in the membrane. It participates in aromatic compound metabolism; phenylpropanoid biosynthesis. The chain is Cytochrome P450 84A1 (CYP84A1) from Arabidopsis thaliana (Mouse-ear cress).